A 101-amino-acid polypeptide reads, in one-letter code: Urease subunit beta (101 aa).

The protein belongs to the urease beta subunit family. Heterotrimer of UreA (gamma), UreB (beta) and UreC (alpha) subunits. Three heterotrimers associate to form the active enzyme.

It is found in the cytoplasm. The catalysed reaction is urea + 2 H2O + H(+) = hydrogencarbonate + 2 NH4(+). It functions in the pathway nitrogen metabolism; urea degradation; CO(2) and NH(3) from urea (urease route): step 1/1. The polypeptide is Urease subunit beta (Paraburkholderia phytofirmans (strain DSM 17436 / LMG 22146 / PsJN) (Burkholderia phytofirmans)).